Here is a 389-residue protein sequence, read N- to C-terminus: MGGCFSNRIKTDIASSTWLSSKFLSRDGSKGSSTASFSYMPRTEGEILQNANLKNFSLSELKSATRNFRPDSVVGEGGFGCVFKGWIDESSLAPSKPGTGIVIAVKRLNQEGFQGHREWLAEINYLGQLDHPNLVKLIGYCLEEEHRLLVYEFMTRGSLENHLFRRGTFYQPLSWNTRVRMALGAARGLAFLHNAQPQVIYRDFKASNILLDSNYNAKLSDFGLARDGPMGDNSHVSTRVMGTQGYAAPEYLATGHLSVKSDVYSFGVVLLELLSGRRAIDKNQPVGEHNLVDWARPYLTNKRRLLRVMDPRLQGQYSLTRALKIAVLALDCISIDAKSRPTMNEIVKTMEELHIQKEASKEQQNPQISIDNIINKSPQAVNYPRPSIM.

A lipid anchor (N-myristoyl glycine) is attached at G2. The S-palmitoyl cysteine moiety is linked to residue C4. The Protein kinase domain maps to 68 to 353; the sequence is FRPDSVVGEG…NEIVKTMEEL (286 aa). Residues 74 to 82 and K106 each bind ATP; that span reads VGEGGFGCV. The residue at position 151 (Y151) is a Phosphotyrosine. D203 (proton acceptor) is an active-site residue. Phosphoserine is present on residues S207 and S237. Residues T238 and T243 each carry the phosphothreonine modification. Y251 is subject to Phosphotyrosine.

This sequence belongs to the protein kinase superfamily. Ser/Thr protein kinase family. Roots, leaves and stems.

The protein resides in the cell membrane. It carries out the reaction L-seryl-[protein] + ATP = O-phospho-L-seryl-[protein] + ADP + H(+). The catalysed reaction is L-threonyl-[protein] + ATP = O-phospho-L-threonyl-[protein] + ADP + H(+). In terms of biological role, may play a role in the regulation of plant growth and development. May be involved in plant defense signaling. The chain is Probable serine/threonine-protein kinase PBL11 from Arabidopsis thaliana (Mouse-ear cress).